Consider the following 82-residue polypeptide: Delta-actitoxin-Aeq2b 3 (82 aa).

Residues 1–19 form the signal peptide; that stretch reads MNRLMILVFAAVILALASA. The propeptide occupies 20 to 26; it reads DEDVDIT. 3 disulfides stabilise this stretch: cysteine 32/cysteine 79, cysteine 34/cysteine 69, and cysteine 62/cysteine 80.

The protein belongs to the sea anemone sodium channel inhibitory toxin family. Type I subfamily.

Its subcellular location is the secreted. It is found in the nematocyst. Its function is as follows. Binds specifically to voltage-gated sodium channels (Nav), thereby delaying their inactivation during signal transduction. Causes death to crabs. The sequence is that of Delta-actitoxin-Aeq2b 3 from Actinia equina (Beadlet anemone).